The following is a 790-amino-acid chain: Aryl hydrocarbon receptor nuclear translocator (790 aa).

A compositionally biased stretch (polar residues) spans 1–10 (MAATTANPEM). Residues 1 to 96 (MAATTANPEM…ERLARENHSE (96 aa)) are disordered. A2 carries the post-translational modification N-acetylalanine. A compositionally biased stretch (gly residues) spans 26 to 35 (PGPGIQGGGA). K58 is covalently cross-linked (Glycyl lysine isopeptide (Lys-Gly) (interchain with G-Cter in SUMO2)). Basic and acidic residues predominate over residues 60-96 (LRCDDDQMSNDKERFARSDDEQSSADKERLARENHSE). A Phosphoserine modification is found at S77. The interval 88-128 (RLARENHSEIERRRRNKMTAYITELSDMVPTCSALARKPDK) is DNA-binding. In terms of domain architecture, bHLH spans 89 to 142 (LARENHSEIERRRRNKMTAYITELSDMVPTCSALARKPDKLTILRMAVSHMKSL). The interval 112–168 (LSDMVPTCSALARKPDKLTILRMAVSHMKSLRGTGNTSTDGTYKPSFLTDQELKHLI) is required for heterodimer formation with HIF1A. The required for heterodimer formation with EPAS1 stretch occupies residues 112–264 (LSDMVPTCSA…MCMGSRRSFI (153 aa)). 2 consecutive PAS domains span residues 161-235 (DQEL…LTGR) and 349-419 (PNCT…VKLK). The segment at 167-171 (LILEA) is mediates the transcription activity and dimerization of the AHR:ARNT complex. A PAC domain is found at 424–467 (SVMFRFRSKNREWLWVRTSSFTFQNPYSDEIEYIICTNTNVKNS). Polar residues-rich tracts occupy residues 465–490 (KNSSQEPRPSLSNTIQRPQLGPTANL), 520–537 (TSCNHSQVSVQPVTTTGP), and 661–679 (TRSSQFGVGSFQTPSSFSP). Disordered stretches follow at residues 465–492 (KNSSQEPRPSLSNTIQRPQLGPTANLSL), 514–543 (PGRDGLTSCNHSQVSVQPVTTTGPEHSKPL), 661–716 (TRSS…AGQF), and 728–790 (PQWQ…SFSE). Low complexity predominate over residues 683–697 (PGASTASPGAAAYPS). Over residues 741–755 (SNEQHVQQPSAQQPG) the composition is skewed to polar residues.

Monomer. Homodimer only upon binding to a DNA. Efficient DNA binding requires dimerization with another bHLH protein. Interacts with TACC3. Interacts with HIF1A, EPAS1, NPAS1 and NPAS3; forms a heterodimer that binds core DNA sequence 5'-TACGTG-3' within the hypoxia response element (HRE) of target gene promoters. Forms a heterodimer with AHRR, as well as with other bHLH proteins. Interacts with NOCA7. Interacts with TACC3. Interacts with AHR; the heterodimer ARNT:AHR binds to core DNA sequence 5'-TGCGTG-3' within the dioxin response element (DRE) of target gene promoters and activates their transcription. Interacts with SIM1 and NPAS4.

It is found in the nucleus. In terms of biological role, required for activity of the AHR. Upon ligand binding, AHR translocates into the nucleus, where it heterodimerizes with ARNT and induces transcription by binding to xenobiotic response elements (XRE). Not required for the ligand-binding subunit to translocate from the cytosol to the nucleus after ligand binding. The complex initiates transcription of genes involved in the regulation of a variety of biological processes, including angiogenesis, hematopoiesis, drug and lipid metabolism, cell motility and immune modulation. The heterodimer binds to core DNA sequence 5'-TACGTG-3' within the hypoxia response element (HRE) of target gene promoters and functions as a transcriptional regulator of the adaptive response to hypoxia. The heterodimer ARNT:AHR binds to core DNA sequence 5'-TGCGTG-3' within the dioxin response element (DRE) of target gene promoters and activates their transcription. The protein is Aryl hydrocarbon receptor nuclear translocator (ARNT) of Bos taurus (Bovine).